A 341-amino-acid polypeptide reads, in one-letter code: Dihydroorotate dehydrogenase (quinone) (341 aa).

Residues 61 to 65 (AGLDK) and T85 contribute to the FMN site. K65 is a substrate binding site. 110–114 (NRMGF) is a substrate binding site. FMN contacts are provided by N138 and N171. N171 provides a ligand contact to substrate. S174 serves as the catalytic Nucleophile. Substrate is bound at residue N176. Positions 216 and 244 each coordinate FMN. 245–246 (NT) contributes to the substrate binding site. Residues G267, G296, and 317–318 (YS) contribute to the FMN site.

It belongs to the dihydroorotate dehydrogenase family. Type 2 subfamily. In terms of assembly, monomer. FMN is required as a cofactor.

Its subcellular location is the cell membrane. The enzyme catalyses (S)-dihydroorotate + a quinone = orotate + a quinol. The protein operates within pyrimidine metabolism; UMP biosynthesis via de novo pathway; orotate from (S)-dihydroorotate (quinone route): step 1/1. Functionally, catalyzes the conversion of dihydroorotate to orotate with quinone as electron acceptor. In Pseudomonas putida (strain W619), this protein is Dihydroorotate dehydrogenase (quinone).